A 503-amino-acid chain; its full sequence is Puromycin resistance protein pur8 (503 aa).

Residues 1–24 (MARKPDISAVPVESAACQGPDPRR) lie on the Cytoplasmic side of the membrane. A helical membrane pass occupies residues 25–45 (WWGLVVILAAQLLVVLDGTVV). Residues 46–64 (NIALPSVQRDLGMSDTSRQ) are Extracellular-facing. A helical transmembrane segment spans residues 65-85 (WVITAYTLAFGGLLLLGGRVA). The Cytoplasmic segment spans residues 86 to 92 (DAFGRRR). Residues 93-113 (IFAVGILGFGLASLLGGAAPD) form a helical membrane-spanning segment. The Extracellular portion of the chain corresponds to 114–122 (PGTLFLARA). Residues 123-143 (LQGVFAAALAPAALALINTLF) traverse the membrane as a helical segment. At 144–152 (TEPGERGKA) the chain is on the cytoplasmic side. A helical transmembrane segment spans residues 153-173 (FGVYGAVSGGGAAVGLLAGGL). The Extracellular portion of the chain corresponds to 174-181 (LTEYLDWR). A helical membrane pass occupies residues 182–202 (WCLYVNAPVALLALLGCRLLP). The Cytoplasmic segment spans residues 203 to 212 (RDRRTGRAVR). A helical transmembrane segment spans residues 213-233 (LDLPGTLLGCGGLVAIVYAFA). Over 234–241 (EAESGWGD) the chain is Extracellular. A helical transmembrane segment spans residues 242 to 262 (PLVVRLLVLGVLMLVAFALVE). The Cytoplasmic segment spans residues 263–280 (RRVQDPLLPPGVVAHRVR). The helical transmembrane segment at 281–301 (GGSFLVVGLPQIGLFGLFLFL) threads the bilayer. Over 302-313 (TYYLQGILDYSP) the chain is Extracellular. A helical membrane pass occupies residues 314–334 (VLTGVAFLPLGLGIAVGSSLI). The Cytoplasmic segment spans residues 335-346 (AARLLPRTRPRT). A helical transmembrane segment spans residues 347–367 (LIVGALLAAAAGMALLTRLEP). The Extracellular portion of the chain corresponds to 368-371 (DTPQ). A helical membrane pass occupies residues 372–392 (VYLTHLLPAQILIGLGIGCMM). The Cytoplasmic segment spans residues 393 to 422 (MPAMHTATARVAPHEAGAAAAVVNSAQQVG). The helical transmembrane segment at 423 to 443 (GALGVALLNTVSTGATAAYLA) threads the bilayer. Topologically, residues 444 to 461 (DHGTSPAATVDGTVHGYT) are extracellular. Residues 462 to 482 (VAIAFAVGVLLLTAVLAWVLI) traverse the membrane as a helical segment. The Cytoplasmic segment spans residues 483 to 503 (DSRTEAADETGSASVTPARPR).

It belongs to the major facilitator superfamily. EmrB family.

It localises to the cell membrane. In terms of biological role, may be involved in active puromycin efflux energized by a proton-dependent electrochemical gradient. In addition, it could be implicated in secreting N-acetylpuromycin, the last intermediate of the puromycin biosynthesis pathway, to the environment. The protein is Puromycin resistance protein pur8 (pur8) of Streptomyces alboniger.